We begin with the raw amino-acid sequence, 716 residues long: Translation initiation factor IF-2 (716 aa).

Residues 52 to 135 form a disordered region; the sequence is QQESNNNTKQ…PAAEPKEMPS (84 aa). A compositionally biased stretch (low complexity) spans 56–125; that stretch reads NNNTKQNTQN…KNNKGNKNNK (70 aa). The 170-residue stretch at 218–387 folds into the tr-type G domain; that stretch reads ERPAVVTIMG…GLVAEVQELK (170 aa). Residues 227-234 are G1; sequence GHVDHGKT. Residue 227-234 coordinates GTP; that stretch reads GHVDHGKT. The G2 stretch occupies residues 252–256; it reads GITQH. A G3 region spans residues 273–276; that stretch reads DTPG. GTP contacts are provided by residues 273–277 and 327–330; these read DTPGH and NKID. The tract at residues 327–330 is G4; that stretch reads NKID. The segment at 363–365 is G5; the sequence is SAL.

Belongs to the TRAFAC class translation factor GTPase superfamily. Classic translation factor GTPase family. IF-2 subfamily.

Its subcellular location is the cytoplasm. One of the essential components for the initiation of protein synthesis. Protects formylmethionyl-tRNA from spontaneous hydrolysis and promotes its binding to the 30S ribosomal subunits. Also involved in the hydrolysis of GTP during the formation of the 70S ribosomal complex. The polypeptide is Translation initiation factor IF-2 (Staphylococcus haemolyticus (strain JCSC1435)).